Reading from the N-terminus, the 255-residue chain is 1-(5-phosphoribosyl)-5-[(5-phosphoribosylamino)methylideneamino] imidazole-4-carboxamide isomerase (255 aa).

D8 functions as the Proton acceptor in the catalytic mechanism. The Proton donor role is filled by D129.

The protein belongs to the HisA/HisF family.

The protein localises to the cytoplasm. It catalyses the reaction 1-(5-phospho-beta-D-ribosyl)-5-[(5-phospho-beta-D-ribosylamino)methylideneamino]imidazole-4-carboxamide = 5-[(5-phospho-1-deoxy-D-ribulos-1-ylimino)methylamino]-1-(5-phospho-beta-D-ribosyl)imidazole-4-carboxamide. It functions in the pathway amino-acid biosynthesis; L-histidine biosynthesis; L-histidine from 5-phospho-alpha-D-ribose 1-diphosphate: step 4/9. The sequence is that of 1-(5-phosphoribosyl)-5-[(5-phosphoribosylamino)methylideneamino] imidazole-4-carboxamide isomerase from Parasynechococcus marenigrum (strain WH8102).